A 450-amino-acid chain; its full sequence is Asparagine--tRNA ligase (450 aa).

The protein belongs to the class-II aminoacyl-tRNA synthetase family. In terms of assembly, homodimer.

The protein localises to the cytoplasm. The catalysed reaction is tRNA(Asn) + L-asparagine + ATP = L-asparaginyl-tRNA(Asn) + AMP + diphosphate + H(+). The polypeptide is Asparagine--tRNA ligase (Enterococcus faecalis (strain ATCC 700802 / V583)).